We begin with the raw amino-acid sequence, 465 residues long: Probable zinc metalloprotease PTT_17836 (465 aa).

The N-terminal stretch at 1-20 (MRSASTLAVCAATLLQIACS) is a signal peptide. Residue asparagine 140 is glycosylated (N-linked (GlcNAc...) asparagine). Residues histidine 163, aspartate 183, and glutamate 216 each contribute to the Zn(2+) site. Asparagine 231 is a glycosylation site (N-linked (GlcNAc...) asparagine). Position 243 (aspartate 243) interacts with Zn(2+). 6 N-linked (GlcNAc...) asparagine glycosylation sites follow: asparagine 272, asparagine 330, asparagine 378, asparagine 384, asparagine 421, and asparagine 426. The region spanning 371 to 464 (APTNVGVNTT…LPFPFGCARN (94 aa)) is the Fibronectin type-III domain.

The protein belongs to the peptidase M28 family. M28B subfamily. Zn(2+) is required as a cofactor.

The protein localises to the secreted. This Pyrenophora teres f. teres (strain 0-1) (Barley net blotch fungus) protein is Probable zinc metalloprotease PTT_17836.